The chain runs to 1550 residues: DNA excision repair protein ERCC-6-like 2 (1550 aa).

Positions 1 to 23 (MDPSAPQPRAETSGKDIWHPGER) are disordered. Residues 12–22 (TSGKDIWHPGE) show a composition bias toward basic and acidic residues. Residues 135 to 321 (YGHYIHGGGC…WCVMDWAVPG (187 aa)) enclose the Helicase ATP-binding domain. Residue 148-155 (DDMGLGKT) participates in ATP binding. Residues 272-275 (DEAH) carry the DEAH box motif. The 151-residue stretch at 512 to 662 (VLQQLLNHCR…CVVVGSENAK (151 aa)) folds into the Helicase C-terminal domain. The short motif at 785–796 (PGQLTLLQCGFS) is the Atypical PIP-box element. Disordered stretches follow at residues 808 to 848 (DSDG…TSKH), 914 to 1002 (FPDN…SSLR), and 1354 to 1410 (AETK…TRTG). Basic and acidic residues-rich tracts occupy residues 830–840 (EAKDAGCEKNQ) and 933–953 (TEHT…DKRN). A phosphoserine mark is found at Ser-980 and Ser-983. Residues 992–1002 (SRVRKRASSLR) show a composition bias toward basic residues. A compositionally biased stretch (polar residues) spans 1359–1388 (SPVSSTQEIDSGKNSQASEDTVTSRSLNSE). Residues Ser-1373 and Ser-1376 each carry the phosphoserine modification. Positions 1389–1405 (SETRERRLENTMKDQQD) are enriched in basic and acidic residues.

This sequence belongs to the SNF2/RAD54 helicase family. As to quaternary structure, interacts with NEK6. Interacts (via an atypical PIP-box) with PCNA; this interaction facilitates cenrtomeric localization of ERCC6L2. Interacts with CYREN; this interaction is DNA independent. Interacts with XRCC6 and XRCC5. Phosphorylated by NEK6. Expressed in bone marrow (at protein level).

The protein resides in the nucleus. Its subcellular location is the cytoplasm. It localises to the cytoskeleton. The protein localises to the microtubule organizing center. It is found in the centrosome. The protein resides in the mitochondrion. Its subcellular location is the chromosome. It localises to the centromere. Its function is as follows. Promotes double-strand break (DSB) end-joining and facilitates programmed recombination by controlling how DNA ends are joined in a spatially oriented manner during repair. Also plays a role in DNA repair by restricting DNA end resection in double strand break (DSB) repair. Facilitates replication of complex DNA regions and regulates the maintenance of chromatin structure. The protein is DNA excision repair protein ERCC-6-like 2 of Homo sapiens (Human).